A 518-amino-acid chain; its full sequence is Probable thiamine biosynthetic bifunctional enzyme (518 aa).

The tract at residues 1-229 (MKRQIDYSLY…ATPPCFAQAR (229 aa)) is thiamine-phosphate synthase. 4-amino-2-methyl-5-(diphosphooxymethyl)pyrimidine-binding positions include 40–44 (QHREK) and Asn-72. Asp-73 and Asp-92 together coordinate Mg(2+). Ser-111 provides a ligand contact to 4-amino-2-methyl-5-(diphosphooxymethyl)pyrimidine. 137-139 (TNT) lines the 2-[(2R,5Z)-2-carboxy-4-methylthiazol-5(2H)-ylidene]ethyl phosphate pocket. Lys-140 serves as a coordination point for 4-amino-2-methyl-5-(diphosphooxymethyl)pyrimidine. 2-[(2R,5Z)-2-carboxy-4-methylthiazol-5(2H)-ylidene]ethyl phosphate contacts are provided by residues Gly-173 and 199–200 (VS). The segment at 230–518 (SSLTTPKDLL…IERAKLEKAE (289 aa)) is hydroxyethylthiazole kinase. Met-281 contributes to the 5-(2-hydroxyethyl)-4-methylthiazole binding site. 2 residues coordinate ATP: Lys-355 and Ser-403. 5-(2-hydroxyethyl)-4-methylthiazole is bound at residue Ala-430. Cys-433 serves as the catalytic Proton acceptor; for hydroxyethylthiazole kinase activity.

In the N-terminal section; belongs to the thiamine-phosphate synthase family. It in the C-terminal section; belongs to the Thz kinase family. Mg(2+) is required as a cofactor.

It carries out the reaction 2-[(2R,5Z)-2-carboxy-4-methylthiazol-5(2H)-ylidene]ethyl phosphate + 4-amino-2-methyl-5-(diphosphooxymethyl)pyrimidine + 2 H(+) = thiamine phosphate + CO2 + diphosphate. The enzyme catalyses 2-(2-carboxy-4-methylthiazol-5-yl)ethyl phosphate + 4-amino-2-methyl-5-(diphosphooxymethyl)pyrimidine + 2 H(+) = thiamine phosphate + CO2 + diphosphate. The catalysed reaction is 4-methyl-5-(2-phosphooxyethyl)-thiazole + 4-amino-2-methyl-5-(diphosphooxymethyl)pyrimidine + H(+) = thiamine phosphate + diphosphate. It catalyses the reaction 5-(2-hydroxyethyl)-4-methylthiazole + ATP = 4-methyl-5-(2-phosphooxyethyl)-thiazole + ADP + H(+). It functions in the pathway cofactor biosynthesis; thiamine diphosphate biosynthesis; 4-methyl-5-(2-phosphoethyl)-thiazole from 5-(2-hydroxyethyl)-4-methylthiazole: step 1/1. It participates in cofactor biosynthesis; thiamine diphosphate biosynthesis; thiamine phosphate from 4-amino-2-methyl-5-diphosphomethylpyrimidine and 4-methyl-5-(2-phosphoethyl)-thiazole: step 1/1. Condenses 4-methyl-5-(beta-hydroxyethyl)thiazole monophosphate (THZ-P) and 2-methyl-4-amino-5-hydroxymethyl pyrimidine pyrophosphate (HMP-PP) to form thiamine monophosphate (TMP). The sequence is that of Probable thiamine biosynthetic bifunctional enzyme (thi4) from Schizosaccharomyces pombe (strain 972 / ATCC 24843) (Fission yeast).